Consider the following 304-residue polypeptide: Haloalkane dehalogenase (304 aa).

The region spanning 42-154 (PIVFLHGNPT…DSVDLSPEFV (113 aa)) is the AB hydrolase-1 domain. The active-site Nucleophile is aspartate 114. The active-site Proton donor is glutamate 138. Catalysis depends on histidine 280, which acts as the Proton acceptor.

The protein belongs to the haloalkane dehalogenase family. Type 2 subfamily. In terms of assembly, monomer.

It catalyses the reaction 1-haloalkane + H2O = a halide anion + a primary alcohol + H(+). Functionally, catalyzes hydrolytic cleavage of carbon-halogen bonds in halogenated aliphatic compounds, leading to the formation of the corresponding primary alcohols, halide ions and protons. The polypeptide is Haloalkane dehalogenase (Agrobacterium fabrum (strain C58 / ATCC 33970) (Agrobacterium tumefaciens (strain C58))).